A 1642-amino-acid polypeptide reads, in one-letter code: MATAIRDVGVWRQTRTLLLKNYLVKCRTKKSSVQEILFPLFFLFWLILISMMHPNKKYEEVSDIELSPMDKSILSNLILGYTPVTNTTSSVMQRVSTDHLPDVLVTEEYASEKELLASSLSKPSNFVGVVFKDVMSYELRFFPDMVPVSSVYMDSRAGCSKSCDAAQYWSSGFTALQASIDAAIIQLKTNVSLWRELESTKAVIMGEAAVVEIDTFPRGVILIYLVIAFSPFGYFLAIHIVAEKEKRLKEFLKIMGLHDTAFWLSWVLLYTSLIFLMSLLMAVIATASSLFPQSSSIVIFLLFFLYGLSSVFFALMLTPLFKKSKHVGVVEFFVTVVFGFVGLLIVLVESFPRSLVWLFSPLCQCAFLIGIAQVMHLEDFNEGALFSSLTEGPYPLIITLTMLALDSVFYALLAVYLDQVIPGEFGLRRSSLYFLKPSYWSKNKRNYKELSEGNINGNISLNEIVEPVSSEFIGKEAIRISGIQKAYRKKNETVEALRNLSFDIYEGQITALLGHSGTGKSTLMNILCGLCPPSDGFASIYGHRVSEIDEMFEARKMIGICPQSDMNFDVLTVEENLSILASVKGIPANNIIQEVQKVLLDLDMQAIKDNQAKKLSGGQKRKLSLGIAVLGNPKILLLDEPTAGMDPCSRHIVWNLLKYRKANRVTVFSTHFMDEADILADRKAVISQGMLKCVGSSIFLKSKWGIGYRLSMYIDRYCATESLSSLVRQHIPAAALLQQNDQQIVYSLPFKDMDKFSGLFSALDIHSNLGVISYGVSMTTLEDVFLKLEVEAEIDQADYSVFTQQPREEETDSKSFDEMEQSLLILSETKASLVSTMSLWKQQVSTIAKFHFLSLKRESKSVRSVLLLLLIFFAVQIFMFLVHHSFKNAVVPIKLVPDLYFLKPGDKPHKYKTSLLLQNSTDSDINDLIDFFTQQNIIVAMFNDSDYVSAAPHSAALNVVQSEKDYVFTAVFNSTMVYSLPVMMNIISNYYLYHLNVTDTIQIWSTPFIQEITDIVFKVELYFQAALLGIIVTAMPPYFAMENAENHKIKAYTQLKLSGLLPSAYWIGQAVVDIPLFFVVLTLMLGSLFAFHHGLYFYPVKFLAVVFCLIAYVPSVILFTYIASFTFKKILNTKEFWSFIYSVTALACVAVTEITFFLGYGVTAVFHYTFCIAIPIYPLLGCLISFIKGSWKNIPKTENAYNPWDRLLVAVIMPYLQCVLWIFLLQHYEKKHGGRSIRKDPLFRALSQKAKHKKFPEPPINEDEDEDVKAERLKVKELMGCQCCEEKPAIMVYNLHKEYDDKKDFLHSRKTTKVATKYVSFCVKKGEILGLLGPNGAGKSTIINILVGDVEPTSGKIFLGDYGSHSNEDDESTKCMGYCPQTNPLWPDITLQEHFEIYGAVKGMSSGDMKEVISRITKALDLKEHLQKTVKKLPAGIKRKLCFALSMLGNPQVTLLDEPSTGMDPRAKQHMWRAIRTAFKNKKRAALLTTHYMEEAEAVCDRVAIMVSGQLRCIGTVQHLKSKFGKGYFLEIKLKDWIENLEIDRLQREIQYIFPNASRQESFSSILAYKIPKEDVQSLSQSFAKLEEAKHTFAIEEYSFSQATLEQVFVELTKEQEEEDNSCGTLNSTLWWERRQEDRVVF.

A helical membrane pass occupies residues 32–52; it reads SVQEILFPLFFLFWLILISMM. 2 N-linked (GlcNAc...) asparagine glycosylation sites follow: Asn-86 and Asn-190. Helical transmembrane passes span 220 to 240, 264 to 284, 297 to 317, 327 to 347, 355 to 375, and 396 to 416; these read VILI…AIHI, LSWV…MAVI, IVIF…ALML, VGVV…LIVL, LVWL…AQVM, and LIIT…LAVY. N-linked (GlcNAc...) asparagine glycosylation occurs at Asn-458. The ABC transporter 1 domain maps to 478–713; it reads IRISGIQKAY…WGIGYRLSMY (236 aa). 514-521 is an ATP binding site; the sequence is GHSGTGKS. Residues 866–886 form a helical membrane-spanning segment; sequence LLLLLIFFAVQIFMFLVHHSF. Asn-919 is a glycosylation site (N-linked (GlcNAc...) asparagine). Residues 967 to 987 form a helical membrane-spanning segment; it reads VFTAVFNSTMVYSLPVMMNII. An N-linked (GlcNAc...) asparagine glycan is attached at Asn-996. A run of 6 helical transmembrane segments spans residues 1021 to 1041, 1071 to 1091, 1102 to 1122, 1139 to 1159, 1164 to 1184, and 1207 to 1227; these read LYFQ…YFAM, VVDI…LFAF, FLAV…FTYI, FIYS…FFLG, AVFH…GCLI, and LLVA…LLQH. The ABC transporter 2 domain maps to 1290-1533; it reads IMVYNLHKEY…FGKGYFLEIK (244 aa). ATP is bound at residue 1333–1340; that stretch reads GPNGAGKS.

It belongs to the ABC transporter superfamily. ABCA family. In terms of processing, N-glycosylated. In terms of tissue distribution, expressed in testis, epididymis, lung and brain.

The protein resides in the lysosome membrane. Its subcellular location is the late endosome membrane. It localises to the golgi apparatus membrane. It is found in the cell membrane. The catalysed reaction is cholesterol(in) + ATP + H2O = cholesterol(out) + ADP + phosphate + H(+). Functionally, cholesterol efflux transporter in macrophages that is responsible for APOAI/high-density lipoproteins (HDL) formation at the plasma membrane under high cholesterol levels and participates in reverse cholesterol transport. May play a role in the processing of autolysosomes. This Rattus norvegicus (Rat) protein is Cholesterol transporter ABCA5.